The chain runs to 726 residues: Catalase-peroxidase (726 aa).

The tryptophyl-tyrosyl-methioninium (Trp-Tyr) (with M-240) cross-link spans 91–214; it reads WHSAGTYRIA…LGAVQMGLIY (124 aa). The active-site Proton acceptor is histidine 92. A cross-link (tryptophyl-tyrosyl-methioninium (Tyr-Met) (with W-91)) is located at residues 214 to 240; the sequence is YVNPEGPNGNPDPLAAARDIRETFARM. Histidine 255 is a binding site for heme b. The segment at 335 to 362 is disordered; that stretch reads AHQWRPKAGAGADSVPDPHDPNKRRTPS.

Belongs to the peroxidase family. Peroxidase/catalase subfamily. As to quaternary structure, homodimer or homotetramer. Requires heme b as cofactor. In terms of processing, formation of the three residue Trp-Tyr-Met cross-link is important for the catalase, but not the peroxidase activity of the enzyme.

The catalysed reaction is H2O2 + AH2 = A + 2 H2O. It catalyses the reaction 2 H2O2 = O2 + 2 H2O. In terms of biological role, bifunctional enzyme with both catalase and broad-spectrum peroxidase activity. The polypeptide is Catalase-peroxidase (Pseudomonas fluorescens (strain ATCC BAA-477 / NRRL B-23932 / Pf-5)).